A 305-amino-acid chain; its full sequence is Achromobactin-binding periplasmic protein (305 aa).

An N-terminal signal peptide occupies residues M1–A29. One can recognise a Fe/B12 periplasmic-binding domain in the interval R37–G302.

The protein belongs to the bacterial solute-binding protein 8 family.

The protein localises to the periplasm. Binds citrate- or chloride-dependent Fe(3+); part of the binding-protein-dependent transport system CbrABCD for uptake of the siderophore achromobactin. This chain is Achromobactin-binding periplasmic protein (cbrA), found in Dickeya dadantii (strain 3937) (Erwinia chrysanthemi (strain 3937)).